A 538-amino-acid polypeptide reads, in one-letter code: Growth factor receptor-bound protein 14 (538 aa).

The tract at residues 1-73 (MTTSLQDGQS…KAKDLEVQET (73 aa)) is disordered. Residue Thr-2 is modified to N-acetylthreonine. Positions 54-69 (ATRRGAMDRRKAKDLE) are enriched in basic and acidic residues. One can recognise a Ras-associating domain in the interval 104–190 (KKQVIKVYSE…NKLYLRKNYA (87 aa)). One can recognise a PH domain in the interval 232–340 (YPEIHGFLHA…WVTAIRLLKY (109 aa)). Ser-370 and Ser-373 each carry phosphoserine. The SH2 domain maps to 437–533 (WFHHRISRDE…VLPCKLKHYC (97 aa)).

The protein belongs to the GRB7/10/14 family. In terms of assembly, interacts with the cytoplasmic domain of the autophosphorylated insulin receptor, through the SH2 domain. Interacts with GRB14 (via BPS domain); this interaction protects the tyrosines in the activation loop on INSR from dephosphorylation. Binds to the ankyrin repeat region of TNKS2 via its N-terminus. Interacts with activated NRAS. Interacts (via SH2 domain) with TEK/TIE2 (tyrosine phosphorylated). In terms of processing, phosphorylated on serine residues. Phosphorylated on tyrosine residues by TEK/TIE2.

Its subcellular location is the cytoplasm. It localises to the endosome membrane. Functionally, adapter protein which modulates coupling of cell surface receptor kinases with specific signaling pathways. Binds to, and suppresses signals from, the activated insulin receptor (INSR). Potent inhibitor of insulin-stimulated MAPK3 phosphorylation. Plays a critical role regulating PDPK1 membrane translocation in response to insulin stimulation and serves as an adapter protein to recruit PDPK1 to activated insulin receptor, thus promoting PKB/AKT1 phosphorylation and transduction of the insulin signal. In Rattus norvegicus (Rat), this protein is Growth factor receptor-bound protein 14 (Grb14).